The primary structure comprises 20 residues: Beta-1,3-glucan-binding protein 2 (20 aa).

Belongs to the insect beta-1,3-glucan binding protein family. Monomer.

Its subcellular location is the secreted. Functionally, involved in the recognition of invading microorganisms causing their aggregation. Activates the phenoloxidase cascade. Binds specifically to beta-1,3-glucan. Binds the A.niger cell wall component alpha-1,3-glucan, a fungal pathogen-associated molecular pattern (PAMP) that activates the host immune response. The chain is Beta-1,3-glucan-binding protein 2 from Galleria mellonella (Greater wax moth).